The primary structure comprises 296 residues: Glycine--tRNA ligase alpha subunit (296 aa).

The protein belongs to the class-II aminoacyl-tRNA synthetase family. Tetramer of two alpha and two beta subunits.

Its subcellular location is the cytoplasm. It carries out the reaction tRNA(Gly) + glycine + ATP = glycyl-tRNA(Gly) + AMP + diphosphate. The polypeptide is Glycine--tRNA ligase alpha subunit (Francisella tularensis subsp. novicida (strain U112)).